A 78-amino-acid polypeptide reads, in one-letter code: Sec-independent protein translocase protein TatA (78 aa).

Residues 1–21 form a helical membrane-spanning segment; that stretch reads MGSLSIWHWIVVVAVILLLFG. The span at 43–55 shows a compositional bias: basic and acidic residues; that stretch reads MKDDEKTAEKPEP. The tract at residues 43 to 78 is disordered; sequence MKDDEKTAEKPEPVKTINHNADGSGAARSDTGSKVI.

It belongs to the TatA/E family. In terms of assembly, the Tat system comprises two distinct complexes: a TatABC complex, containing multiple copies of TatA, TatB and TatC subunits, and a separate TatA complex, containing only TatA subunits. Substrates initially bind to the TatABC complex, which probably triggers association of the separate TatA complex to form the active translocon.

The protein resides in the cell inner membrane. Functionally, part of the twin-arginine translocation (Tat) system that transports large folded proteins containing a characteristic twin-arginine motif in their signal peptide across membranes. TatA could form the protein-conducting channel of the Tat system. The protein is Sec-independent protein translocase protein TatA of Nitrobacter winogradskyi (strain ATCC 25391 / DSM 10237 / CIP 104748 / NCIMB 11846 / Nb-255).